Consider the following 91-residue polypeptide: Small ribosomal subunit protein uS17 (91 aa).

It belongs to the universal ribosomal protein uS17 family. In terms of assembly, part of the 30S ribosomal subunit.

Functionally, one of the primary rRNA binding proteins, it binds specifically to the 5'-end of 16S ribosomal RNA. This is Small ribosomal subunit protein uS17 from Salinispora tropica (strain ATCC BAA-916 / DSM 44818 / JCM 13857 / NBRC 105044 / CNB-440).